Reading from the N-terminus, the 142-residue chain is Large ribosomal subunit protein uL11 (142 aa).

This sequence belongs to the universal ribosomal protein uL11 family. In terms of assembly, part of the ribosomal stalk of the 50S ribosomal subunit. Interacts with L10 and the large rRNA to form the base of the stalk. L10 forms an elongated spine to which L12 dimers bind in a sequential fashion forming a multimeric L10(L12)X complex. Post-translationally, one or more lysine residues are methylated.

Forms part of the ribosomal stalk which helps the ribosome interact with GTP-bound translation factors. This is Large ribosomal subunit protein uL11 from Mycobacteroides abscessus (strain ATCC 19977 / DSM 44196 / CCUG 20993 / CIP 104536 / JCM 13569 / NCTC 13031 / TMC 1543 / L948) (Mycobacterium abscessus).